The following is a 271-amino-acid chain: Formamidopyrimidine-DNA glycosylase (271 aa).

The Schiff-base intermediate with DNA role is filled by P2. The active-site Proton donor is E3. K58 acts as the Proton donor; for beta-elimination activity in catalysis. DNA is bound by residues H91, R110, and R152. The segment at 237-271 adopts an FPG-type zinc-finger fold; sequence WVYGRAGQSCRQCGELVSKTRQGQRSTFFCARCQH. R261 (proton donor; for delta-elimination activity) is an active-site residue.

It belongs to the FPG family. In terms of assembly, monomer. It depends on Zn(2+) as a cofactor.

It catalyses the reaction Hydrolysis of DNA containing ring-opened 7-methylguanine residues, releasing 2,6-diamino-4-hydroxy-5-(N-methyl)formamidopyrimidine.. The enzyme catalyses 2'-deoxyribonucleotide-(2'-deoxyribose 5'-phosphate)-2'-deoxyribonucleotide-DNA = a 3'-end 2'-deoxyribonucleotide-(2,3-dehydro-2,3-deoxyribose 5'-phosphate)-DNA + a 5'-end 5'-phospho-2'-deoxyribonucleoside-DNA + H(+). Functionally, involved in base excision repair of DNA damaged by oxidation or by mutagenic agents. Acts as a DNA glycosylase that recognizes and removes damaged bases. Has a preference for oxidized purines, such as 7,8-dihydro-8-oxoguanine (8-oxoG). Has AP (apurinic/apyrimidinic) lyase activity and introduces nicks in the DNA strand. Cleaves the DNA backbone by beta-delta elimination to generate a single-strand break at the site of the removed base with both 3'- and 5'-phosphates. This Nitrosomonas europaea (strain ATCC 19718 / CIP 103999 / KCTC 2705 / NBRC 14298) protein is Formamidopyrimidine-DNA glycosylase.